A 273-amino-acid polypeptide reads, in one-letter code: Ribosomal RNA small subunit methyltransferase A (273 aa).

The S-adenosyl-L-methionine site is built by N18, L20, G45, E66, D91, and N113.

The protein belongs to the class I-like SAM-binding methyltransferase superfamily. rRNA adenine N(6)-methyltransferase family. RsmA subfamily.

The protein resides in the cytoplasm. The catalysed reaction is adenosine(1518)/adenosine(1519) in 16S rRNA + 4 S-adenosyl-L-methionine = N(6)-dimethyladenosine(1518)/N(6)-dimethyladenosine(1519) in 16S rRNA + 4 S-adenosyl-L-homocysteine + 4 H(+). Its function is as follows. Specifically dimethylates two adjacent adenosines (A1518 and A1519) in the loop of a conserved hairpin near the 3'-end of 16S rRNA in the 30S particle. May play a critical role in biogenesis of 30S subunits. The sequence is that of Ribosomal RNA small subunit methyltransferase A from Klebsiella pneumoniae subsp. pneumoniae (strain ATCC 700721 / MGH 78578).